Here is an 83-residue protein sequence, read N- to C-terminus: Small ribosomal subunit protein bS20 (83 aa).

Basic residues predominate over residues 1–11 (MANHKSAAKRA). Residues 1–44 (MANHKSAAKRAKQSEARRLRNKSTRSSMNTAVKKVRTAKEAGTD) are disordered.

The protein belongs to the bacterial ribosomal protein bS20 family.

Its function is as follows. Binds directly to 16S ribosomal RNA. The polypeptide is Small ribosomal subunit protein bS20 (Desulforapulum autotrophicum (strain ATCC 43914 / DSM 3382 / VKM B-1955 / HRM2) (Desulfobacterium autotrophicum)).